The primary structure comprises 392 residues: Chalcone synthase-like protein 1 (392 aa).

Cysteine 166 is a catalytic residue.

The protein belongs to the thiolase-like superfamily. Chalcone/stilbene synthases family. As to expression, expressed at the same level in leaves and in glandular trichomes.

The protein localises to the cytoplasm. Chalcone synthase that may use malonyl-CoA and hexanoyl-CoA as substrates but without producing olivetol or olivetolic acid. This chain is Chalcone synthase-like protein 1 (CAN383), found in Cannabis sativa (Hemp).